Consider the following 446-residue polypeptide: 3',5'-cyclic-AMP phosphodiesterase 7B (446 aa).

The 324-residue stretch at 97 to 420 (LDEDYLGQAR…AQWKSLLSNQ (324 aa)) folds into the PDEase domain. Residue histidine 173 is the Proton donor of the active site. A divalent metal cation-binding residues include histidine 177, histidine 213, aspartate 214, and aspartate 323. Positions 422 to 446 (RRRGSGQDLAGPAPETLEQTEGATP) are disordered. Phosphoserine is present on serine 426. Residue threonine 445 is modified to Phosphothreonine.

Belongs to the cyclic nucleotide phosphodiesterase family. PDE7 subfamily. A divalent metal cation is required as a cofactor. As to expression, highly expressed in brain.

It catalyses the reaction 3',5'-cyclic AMP + H2O = AMP + H(+). It participates in purine metabolism; 3',5'-cyclic AMP degradation; AMP from 3',5'-cyclic AMP: step 1/1. Its activity is regulated as follows. Inhibited by dipyridamole, IBMX and SCH 51866. Insensitive to zaprinast, rolipram, and milrinone. Its function is as follows. Hydrolyzes the second messenger cAMP, which is a key regulator of many important physiological processes. May be involved in the control of cAMP-mediated neural activity and cAMP metabolism in the brain. The polypeptide is 3',5'-cyclic-AMP phosphodiesterase 7B (Mus musculus (Mouse)).